The primary structure comprises 442 residues: MRERTTELVQGFRHSVPYINAHRGKKFVIMLSGEAIKYGNFSGIINDIGLLHSLGIRLIVVYGSCPQINANLKEKNIKITYHKYIRVTDLLSLEQVKQAAGRLQLDITARLSMSLSNTPLQGANINVVSGNFIIAQPLGVDDGIDYCHSGRIRRIDKKAINCQLENGAIVLIGPVAVSVTGESFNLTSEEIATQVSIKLKAEKMIGFCSKQGVIDSQGKTISELLPNNIQNEIKKLEGKGDYISSTIRFLRGSIKACKSGVNRSHLISYHKNGALLQELFSRDGIGTQMVMESAEKIRQANINDIGGILELIRPLEKKGILVRRSREQLEMEVDKFTIIERDNLTIACAALYPFFKEKIGEMACVAVHPDYRNSSRGDLLLQTMKLNAKKLNLKKIFVLTTQSIHWFQERGFILVDVEILPESKKKMYNYQRCSKILMIDLF.

The N-acetyltransferase domain occupies 295–442 (EKIRQANIND…CSKILMIDLF (148 aa)).

The protein belongs to the acetyltransferase family. ArgA subfamily. Homohexamer.

The protein localises to the cytoplasm. It carries out the reaction L-glutamate + acetyl-CoA = N-acetyl-L-glutamate + CoA + H(+). It functions in the pathway amino-acid biosynthesis; L-arginine biosynthesis; N(2)-acetyl-L-ornithine from L-glutamate: step 1/4. This is Amino-acid acetyltransferase (argA) from Buchnera aphidicola subsp. Schizaphis graminum (strain Sg).